The following is a 779-amino-acid chain: Translation initiation factor IF-2 (779 aa).

A disordered region spans residues 44–193 (RQLDNAVDGT…TPPKPKELPE (150 aa)). Basic and acidic residues predominate over residues 53–65 (TNKKAEAPKKETT). Over residues 66–81 (SNENGNSKGPNKPNMT) the composition is skewed to polar residues. Composition is skewed to low complexity over residues 82 to 93 (NSNEKSNKPNKP) and 117 to 167 (ANTS…NNKG). A tr-type G domain is found at 280-449 (ERPPVVTIMG…LLVSEVEELK (170 aa)). A G1 region spans residues 289-296 (GHVDHGKT). Position 289-296 (289-296 (GHVDHGKT)) interacts with GTP. The segment at 314–318 (GITQH) is G2. The interval 335–338 (DTPG) is G3. Residues 335 to 339 (DTPGH) and 389 to 392 (NKID) contribute to the GTP site. The tract at residues 389–392 (NKID) is G4. The G5 stretch occupies residues 425–427 (SAK).

It belongs to the TRAFAC class translation factor GTPase superfamily. Classic translation factor GTPase family. IF-2 subfamily.

The protein resides in the cytoplasm. One of the essential components for the initiation of protein synthesis. Protects formylmethionyl-tRNA from spontaneous hydrolysis and promotes its binding to the 30S ribosomal subunits. Also involved in the hydrolysis of GTP during the formation of the 70S ribosomal complex. The chain is Translation initiation factor IF-2 from Listeria monocytogenes serovar 1/2a (strain ATCC BAA-679 / EGD-e).